The chain runs to 261 residues: tRNA pseudouridine synthase A (261 aa).

Residue aspartate 51 is the Nucleophile of the active site. Tyrosine 109 lines the substrate pocket.

The protein belongs to the tRNA pseudouridine synthase TruA family. Homodimer.

The catalysed reaction is uridine(38/39/40) in tRNA = pseudouridine(38/39/40) in tRNA. In terms of biological role, formation of pseudouridine at positions 38, 39 and 40 in the anticodon stem and loop of transfer RNAs. The chain is tRNA pseudouridine synthase A from Shewanella loihica (strain ATCC BAA-1088 / PV-4).